The following is a 159-amino-acid chain: uncharacterized protein (159 aa).

Positions 1 to 13 (MTQPTRPSVTCDQ) are enriched in polar residues. Residues 1 to 57 (MTQPTRPSVTCDQGSSTIGGTAAQATTSSSATSGSNYQRDRLGRRPEIGVGGQPQIC) are disordered. Residues 14 to 35 (GSSTIGGTAAQATTSSSATSGS) are compositionally biased toward low complexity. Basic and acidic residues predominate over residues 38 to 47 (QRDRLGRRPE).

This is an uncharacterized protein from Homo sapiens (Human).